A 466-amino-acid polypeptide reads, in one-letter code: Triplex capsid protein 1 (466 aa).

The tract at residues 1-29 (MKTKPLPTAPMAWAESAVETTTSPRELAG) is disordered.

Belongs to the herpesviridae TRX1 protein family. Interacts with TRX2, MCP and capsid vertex component 2/CVC2.

It is found in the virion. Its subcellular location is the host nucleus. Functionally, structural component of the T=16 icosahedral capsid. The capsid is composed of pentamers and hexamers of major capsid protein/MCP, which are linked together by heterotrimers called triplexes. These triplexes are formed by a single molecule of triplex protein 1/TRX1 and two copies of triplex protein 2/TRX2. Additionally, TRX1 is required for efficient transport of TRX2 to the nucleus, which is the site of capsid assembly. The chain is Triplex capsid protein 1 from Homo sapiens (Human).